The following is a 553-amino-acid chain: Cytokine-like nuclear factor N-PAC (553 aa).

A PWWP domain is found at 8-66 (LGDLVWGKLGRYPPWPGKIVNPPKDLKKPRGKKCFFVKFFGTEDHAWIKVEQLKPYHAH). Basic and acidic residues-rich tracts occupy residues 92–145 (RAKG…EGKK) and 162–182 (RAQE…KDLS). The segment at 92 to 190 (RAKGKDQTSS…LSIPESSTVK (99 aa)) is disordered. Ser-130 carries the phosphoserine modification. Lys-135 participates in a covalent cross-link: Glycyl lysine isopeptide (Lys-Gly) (interchain with G-Cter in SUMO2). The residue at position 167 (Ser-167) is a Phosphoserine. A DNA-binding region (a.T hook) is located at residues 168-180 (PRKRGRPPKDEKD). Residues Lys-176, Lys-179, Lys-201, and Lys-211 each participate in a glycyl lysine isopeptide (Lys-Gly) (interchain with G-Cter in SUMO2) cross-link. An interaction with histone H3 region spans residues 214–217 (DPHF). The interval 216-225 (HFHHFLLSQT) is interaction with KDM1B. Glycyl lysine isopeptide (Lys-Gly) (interchain with G-Cter in SUMO2) cross-links involve residues Lys-227, Lys-237, Lys-240, and Lys-269. Positions 261-553 (GSVTPTDKKI…MSAVYRAYIH (293 aa)) are dehydrogenase domain. 271 to 285 (GFLGLGLMGSGIVSN) contacts NAD(+). Lys-302 participates in a covalent cross-link: Glycyl lysine isopeptide (Lys-Gly) (interchain with G-Cter in SUMO2). NAD(+) contacts are provided by Thr-362 and Lys-505. Ser-540 is subject to Phosphoserine.

It belongs to the HIBADH-related family. NP60 subfamily. In terms of assembly, homotetramere. Interacts with MAPK14. Interacts with KDM1B at nucleosomes; this interaction stimulates H3K4me1 and H3K4me2 demethylation. Binds to mononucleosomes. Interacts with GATA4; the interaction is required for a synergistic activation of GATA4 target genes transcription.

The protein localises to the nucleus. Its subcellular location is the chromosome. Its function is as follows. Cytokine-like nuclear factor with chromatin gene reader activity involved in chromatin modification and regulation of gene expression. Acts as a nucleosome-destabilizing factor that is recruited to genes during transcriptional activation. Recognizes and binds histone H3 without a preference for specific epigenetic markers and also binds DNA. Interacts with KDM1B and promotes its histone demethylase activity by facilitating the capture of H3 tails, they form a multifunctional enzyme complex that modifies transcribed chromatin and facilitates Pol II transcription through nucleosomes. Stimulates the acetylation of 'Lys-56' of nucleosomal histone H3 (H3K56ac) by EP300. With GATA4, co-binds a defined set of heart development genes and coregulates their expression during cardiomyocyte differentiation. Regulates p38 MAP kinase activity by mediating stress activation of MAPK14/p38alpha and specifically regulating MAPK14 signaling. Indirectly promotes phosphorylation of MAPK14 and activation of ATF2. The phosphorylation of MAPK14 requires upstream activity of MAP2K4 and MAP2K6. The protein is Cytokine-like nuclear factor N-PAC (GLYR1) of Bos taurus (Bovine).